The chain runs to 36 residues: Photosystem I reaction center subunit VIII (36 aa).

A helical transmembrane segment spans residues Pro7–Tyr29.

It belongs to the PsaI family.

It localises to the plastid. The protein resides in the chloroplast thylakoid membrane. Its function is as follows. May help in the organization of the PsaL subunit. The sequence is that of Photosystem I reaction center subunit VIII from Psilotum nudum (Whisk fern).